Consider the following 476-residue polypeptide: tRNA(Ile)-lysidine synthase (476 aa).

Position 30–35 (30–35 (SGGPDS)) interacts with ATP.

Belongs to the tRNA(Ile)-lysidine synthase family.

Its subcellular location is the cytoplasm. It carries out the reaction cytidine(34) in tRNA(Ile2) + L-lysine + ATP = lysidine(34) in tRNA(Ile2) + AMP + diphosphate + H(+). In terms of biological role, ligates lysine onto the cytidine present at position 34 of the AUA codon-specific tRNA(Ile) that contains the anticodon CAU, in an ATP-dependent manner. Cytidine is converted to lysidine, thus changing the amino acid specificity of the tRNA from methionine to isoleucine. The sequence is that of tRNA(Ile)-lysidine synthase from Bacillus anthracis.